The following is an 852-amino-acid chain: Aconitate hydratase B (852 aa).

Substrate is bound by residues R194, 237–239 (SSR), 405–407 (QDT), and S489. C708, C766, and C769 together coordinate [4Fe-4S] cluster. Residues R788 and R793 each coordinate substrate.

Belongs to the aconitase/IPM isomerase family. In terms of assembly, monomer. [4Fe-4S] cluster is required as a cofactor.

The catalysed reaction is citrate = D-threo-isocitrate. It carries out the reaction (2S,3R)-3-hydroxybutane-1,2,3-tricarboxylate = 2-methyl-cis-aconitate + H2O. It functions in the pathway carbohydrate metabolism; tricarboxylic acid cycle; isocitrate from oxaloacetate: step 2/2. The protein operates within organic acid metabolism; propanoate degradation. Its function is as follows. Involved in the catabolism of short chain fatty acids (SCFA) via the tricarboxylic acid (TCA)(acetyl degradation route) and probably via the 2-methylcitrate cycle I (propionate degradation route). Catalyzes the reversible isomerization of citrate to isocitrate via cis-aconitate. Catalyzes the hydration of 2-methyl-cis-aconitate to yield (2R,3S)-2-methylisocitrate. The apo form of AcnB functions as a RNA-binding regulatory protein. The chain is Aconitate hydratase B (acnB) from Helicobacter pylori (strain J99 / ATCC 700824) (Campylobacter pylori J99).